The chain runs to 286 residues: Probable ketoamine kinase YniA (286 aa).

91–93 (DYL) is an ATP binding site. D193 functions as the Proton acceptor in the catalytic mechanism.

The protein belongs to the fructosamine kinase family.

Its function is as follows. Ketoamine kinase that phosphorylates ketoamines on the third carbon of the sugar moiety to generate ketoamine 3-phosphate. In Escherichia coli O157:H7, this protein is Probable ketoamine kinase YniA (yniA).